Consider the following 329-residue polypeptide: MATIHFTKVHGSQNDFFLVDEEENQIMDWSDAKRADFAIKLCDREHSLGGADGILYVTKSNEAGPIGQMRVVNSDGSIASMCGNGLRTVARYLLEKHALTEAKVETMKAILDVKKATSLGFDIPTYQVEISPVKFNAESLPMNVGVEKLFNQVVPELDSELAFSAVSVPNPHLITFVDQTVLDSDKQETLASYLNSENPYFPDGVNVSFVKRLSDDAIYVRTFERGVGFTNACGTAMSACSLIKKMLDKDTFETPLNVYNDGGRVQVTAKKDEAGEISLQLIGNATFVSTGSVSYERGTVTELTNEATPEQAQYQELVKEVKQFLKTTE.

Substrate-binding residues include N14 and N73. C82 (proton donor) is an active-site residue. Residues 83–84 (GN), N170, N206, and 224–225 (ER) each bind substrate. The active-site Proton acceptor is C233. Substrate is bound at residue 234–235 (GT).

Belongs to the diaminopimelate epimerase family. As to quaternary structure, homodimer.

The protein localises to the cytoplasm. The catalysed reaction is (2S,6S)-2,6-diaminopimelate = meso-2,6-diaminopimelate. It participates in amino-acid biosynthesis; L-lysine biosynthesis via DAP pathway; DL-2,6-diaminopimelate from LL-2,6-diaminopimelate: step 1/1. In terms of biological role, catalyzes the stereoinversion of LL-2,6-diaminopimelate (L,L-DAP) to meso-diaminopimelate (meso-DAP), a precursor of L-lysine and an essential component of the bacterial peptidoglycan. In Listeria innocua serovar 6a (strain ATCC BAA-680 / CLIP 11262), this protein is Diaminopimelate epimerase.